Consider the following 247-residue polypeptide: Granzyme B(G,H) (247 aa).

An N-terminal signal peptide occupies residues 1-18 (MKILLLLLTLSLASRTKA). The propeptide at 19–20 (GE) is activation peptide. The region spanning 21-245 (IIGGHEVKPH…FLSWIKKTMK (225 aa)) is the Peptidase S1 domain. Cys49 and Cys65 are joined by a disulfide. His64 acts as the Charge relay system in catalysis. Asn71 carries N-linked (GlcNAc...) asparagine glycosylation. Asp108 functions as the Charge relay system in the catalytic mechanism. 2 disulfides stabilise this stretch: Cys142–Cys209 and Cys173–Cys188. The N-linked (GlcNAc...) asparagine glycan is linked to Asn182. Catalysis depends on Ser203, which acts as the Charge relay system.

The protein belongs to the peptidase S1 family. Granzyme subfamily.

Its subcellular location is the secreted. It is found in the cytolytic granule. The catalysed reaction is Preferential cleavage: -Asp-|-Xaa- &gt;&gt; -Asn-|-Xaa- &gt; -Met-|-Xaa-, -Ser-|-Xaa-.. With respect to regulation, inactivated by the serine protease inhibitor diisopropylfluorophosphate. Its function is as follows. Abundant protease in the cytosolic granules of cytotoxic T-cells and NK-cells which activates caspase-independent pyroptosis when delivered into the target cell through the immunological synapse. It cleaves after Asp. Once delivered into the target cell, acts by catalyzing cleavage of gasdermin-E (GSDME), releasing the pore-forming moiety of GSDME, thereby triggering pyroptosis and target cell death. Seems to be linked to an activation cascade of caspases (aspartate-specific cysteine proteases) responsible for apoptosis execution. Cleaves caspase-3 and -9 (CASP3 and CASP9, respectively) to give rise to active enzymes mediating apoptosis. Cleaves and activates CASP7 in response to bacterial infection, promoting plasma membrane repair. The polypeptide is Granzyme B(G,H) (Gzmb) (Mus musculus (Mouse)).